The sequence spans 296 residues: MTAKRIDGKAFAAGVRARVAEEVARLKEGHGIVPGLAVVLVGEDPASQVYVGAKGKQTVEVGMASFEHRLPAETSEAELLALIDRLNHDPAVHGILVQLPLPAHLNADLVINALDPAKDVDGFHISNVGRLGTGQKSMVPCTPLGCLMMLRDHLGTLSGLNAVVVGRSNIVGKPMAQLLLGESCTVTIAHSRTRDLAAVCRGADILVAAVGRPEMITGDFVKPGATVIDVGINRIERDGKTKLVGDVDYASAAEVAGAITPVPGGVGPMTIACLLANTLTACCRANGLPEPQGLTA.

Residues 166 to 168 (GRS), Ser-191, and Ile-232 contribute to the NADP(+) site.

Belongs to the tetrahydrofolate dehydrogenase/cyclohydrolase family. In terms of assembly, homodimer.

The catalysed reaction is (6R)-5,10-methylene-5,6,7,8-tetrahydrofolate + NADP(+) = (6R)-5,10-methenyltetrahydrofolate + NADPH. It catalyses the reaction (6R)-5,10-methenyltetrahydrofolate + H2O = (6R)-10-formyltetrahydrofolate + H(+). It functions in the pathway one-carbon metabolism; tetrahydrofolate interconversion. Catalyzes the oxidation of 5,10-methylenetetrahydrofolate to 5,10-methenyltetrahydrofolate and then the hydrolysis of 5,10-methenyltetrahydrofolate to 10-formyltetrahydrofolate. The polypeptide is Bifunctional protein FolD (Cereibacter sphaeroides (strain ATCC 17029 / ATH 2.4.9) (Rhodobacter sphaeroides)).